The sequence spans 572 residues: Proline--tRNA ligase (572 aa).

The protein belongs to the class-II aminoacyl-tRNA synthetase family. ProS type 1 subfamily. Homodimer.

The protein localises to the cytoplasm. The enzyme catalyses tRNA(Pro) + L-proline + ATP = L-prolyl-tRNA(Pro) + AMP + diphosphate. Catalyzes the attachment of proline to tRNA(Pro) in a two-step reaction: proline is first activated by ATP to form Pro-AMP and then transferred to the acceptor end of tRNA(Pro). As ProRS can inadvertently accommodate and process non-cognate amino acids such as alanine and cysteine, to avoid such errors it has two additional distinct editing activities against alanine. One activity is designated as 'pretransfer' editing and involves the tRNA(Pro)-independent hydrolysis of activated Ala-AMP. The other activity is designated 'posttransfer' editing and involves deacylation of mischarged Ala-tRNA(Pro). The misacylated Cys-tRNA(Pro) is not edited by ProRS. This is Proline--tRNA ligase from Enterobacter sp. (strain 638).